The sequence spans 415 residues: Squalene synthase 10 (415 aa).

2 consecutive transmembrane segments (helical) span residues 281–301 and 392–412; these read AIFR…ALCF and LIVI…SNLP.

It belongs to the phytoene/squalene synthase family. Requires Mg(2+) as cofactor. It depends on Mn(2+) as a cofactor.

The protein resides in the endoplasmic reticulum membrane. It carries out the reaction 2 (2E,6E)-farnesyl diphosphate + NADH + H(+) = squalene + 2 diphosphate + NAD(+). The catalysed reaction is 2 (2E,6E)-farnesyl diphosphate + NADPH + H(+) = squalene + 2 diphosphate + NADP(+). Its pathway is terpene metabolism; lanosterol biosynthesis; lanosterol from farnesyl diphosphate: step 1/3. Component of the triterpene saponins (e.g. ginsenosides or panaxosides) and phytosterols biosynthetic pathways. Catalyzes the biosynthesis of squalene. The polypeptide is Squalene synthase 10 (Panax ginseng (Korean ginseng)).